A 91-amino-acid polypeptide reads, in one-letter code: Elongation factor 1-beta (91 aa).

In terms of assembly, homodimer.

Its function is as follows. Promotes the exchange of GDP for GTP in EF-1-alpha/GDP, thus allowing the regeneration of EF-1-alpha/GTP that could then be used to form the ternary complex EF-1-alpha/GTP/AAtRNA. The sequence is that of Elongation factor 1-beta (ef1b) from Saccharolobus solfataricus (strain ATCC 35092 / DSM 1617 / JCM 11322 / P2) (Sulfolobus solfataricus).